Here is a 1296-residue protein sequence, read N- to C-terminus: Clustered mitochondria protein homolog (1296 aa).

The tract at residues 1 to 31 (MTLMNGDGAHEHQAEAEPKQNGHEMGDQTEE) is disordered. Basic and acidic residues predominate over residues 8-26 (GAHEHQAEAEPKQNGHEMG). The Clu domain occupies 333–575 (RAEDAYTSRL…RTFPPDLNFL (243 aa)). Residues 662 to 689 (LDGEAQLKQLEETMAAHKETVDTRSKEV) adopt a coiled-coil conformation. TPR repeat units follow at residues 970-1003 (AFHFFQSGQAKVQQGYLKEGCELINEALNLFNNV), 1012-1045 (CACLRLLARLNYIMGDYSEALSNQQKAVLMSERI), 1096-1129 (ALLDSNIGLVLHGVMEYDLSLRFLENALTINSKY), and 1138-1171 (ALSHHLVARVYETKGEFRSALQHEKDGYTIYKNQ). Residues 1242 to 1274 (QKDLEHLKAEVQRRQQLQEAIKGAENHEAKTKE) are a coiled coil. Positions 1261–1296 (AIKGAENHEAKTKEPEMSETSDSNINAASVAPESSD) are disordered. The span at 1263-1276 (KGAENHEAKTKEPE) shows a compositional bias: basic and acidic residues. A compositionally biased stretch (polar residues) spans 1278 to 1296 (SETSDSNINAASVAPESSD).

This sequence belongs to the CLU family.

Its subcellular location is the cytoplasm. It localises to the cytoplasmic granule. Functionally, mRNA-binding protein involved in proper cytoplasmic distribution of mitochondria. Specifically binds mRNAs of nuclear-encoded mitochondrial proteins in the cytoplasm and regulates transport or translation of these transcripts close to mitochondria, playing a role in mitochondrial biogenesis. The sequence is that of Clustered mitochondria protein homolog from Xenopus tropicalis (Western clawed frog).